Reading from the N-terminus, the 998-residue chain is Collagen alpha-1(I) chain (998 aa).

The interval 1-998 (GGVSVPGPMG…PGPPGPPGPP (998 aa)) is disordered. 9 positions are modified to 4-hydroxyproline: Pro18, Pro21, Pro24, Pro33, Pro48, Pro63, Pro69, Pro78, and Pro84. The segment covering 26–39 (PQGFQGPPGSSGPM) has biased composition (low complexity). The segment covering 51–65 (NGDDGEAGKPGRPGE) has biased composition (basic and acidic residues). Residue Lys87 is modified to 5-hydroxylysine; alternate. O-linked (Gal...) hydroxylysine; alternate glycosylation occurs at Lys87. Ser93 bears the Phosphoserine mark. Over residues 101–115 (DAGPAGPKQMGPRGL) the composition is skewed to low complexity. 4-hydroxyproline occurs at positions 116, 122, 143, 152, 155, 182, 185, 197, 203, 212, 218, 221, and 236. Residues 122–140 (PGASGPAGARGNDGATGAA) are compositionally biased toward low complexity. Over residues 142 to 154 (PPGPTGPAGPPGF) the composition is skewed to pro residues. The span at 188–238 (AGAAGPAGNPGADGQPGAKGANGAPGIAGAPGFPGARGPSGPQGPSGAPGP) shows a compositional bias: low complexity. Lys239 is modified (5-hydroxylysine). 4-hydroxyproline occurs at positions 245, 248, 260, 269, 284, 290, 299, and 305. Residues 294–303 (GERGGPGSRG) show a composition bias toward gly residues. At Lys314 the chain carries 5-hydroxylysine. Residues Pro323, Pro332, Pro338, Pro344, Pro353, Pro356, Pro365, Pro374, Pro380, Pro392, Pro401, Pro410, Pro413, Pro431, Pro449, Pro455, Pro461, Pro467, Pro473, Pro479, Pro491, Pro500, Pro511, Pro523, Pro526, Pro532, Pro538, and Pro547 each carry the 4-hydroxyproline modification. The span at 347-401 (KGLTGSPGSPGPDGKTGPPGPAGQDGRPGPAGPPGARGQAGVMGFPGPKGAAGEP) shows a compositional bias: low complexity. A compositionally biased stretch (low complexity) spans 443 to 470 (QGPAGSPGFQGLPGPAGPPGEAGKPGEQ). Low complexity predominate over residues 513–535 (NDGAKGDAGAPGAPGSQGAPGLQ). The residue at position 559 (Lys559) is a 5-hydroxylysine. 4-hydroxyproline occurs at positions 565 and 580. Over residues 592-606 (TGPSGPAGPTGARGA) the composition is skewed to low complexity. Ser595 bears the Phosphoserine mark. 4-hydroxyproline occurs at positions 607, 613, 616, 625, 631, 649, 658, and 667. A compositionally biased stretch (low complexity) spans 619-646 (AGFAGPPGADGQPGAKGEPGDAGAKGDA). Residues 648–660 (PPGPAGPTGPPGP) show a composition bias toward pro residues. Lys670 is modified (5-hydroxylysine). The segment covering 675–691 (SAGPPGATGFPGAAGRV) has biased composition (low complexity). 2 positions are modified to 4-hydroxyproline: Pro679 and Pro685. Pro693 is subject to 3-hydroxyproline. A 4-hydroxyproline mark is found at Pro694, Pro703, Pro706, Pro727, Pro736, Pro744, Pro753, Pro771, Pro780, Pro783, Pro789, Pro804, Pro810, Pro816, Pro825, and Pro831. Positions 720–729 (ETGPAGRPGE) are enriched in low complexity. Residues 741–762 (KGSPGADGPAGAPGTPGPQGIA) are compositionally biased toward low complexity. Pro residues predominate over residues 803–813 (PPGPMGPPGLA). Over residues 815 to 830 (PPGEAGREGSPGAEGS) the composition is skewed to low complexity. A 5-hydroxylysine modification is found at Lys840. Positions 848–863 (PGPPGAPGAPGAPGPV) are enriched in pro residues. 4-hydroxyproline is present on residues Pro851, Pro854, and Pro857. Over residues 884–898 (AGPAGARGPAGPQGP) the composition is skewed to low complexity. Positions 899–913 (RGDKGETGEQGDRGI) are enriched in basic and acidic residues. Position 902 is a 5-hydroxylysine (Lys902). Lys914 is modified (5-hydroxylysine; alternate). Residue Lys914 is glycosylated (O-linked (Gal...) hydroxylysine; alternate). 4-hydroxyproline is present on residues Pro929, Pro932, Pro950, and Pro965. The segment covering 932–965 (PGEQGPSGASGPAGPRGPPGSAGTPGKDGLNGLP) has biased composition (low complexity). Position 970 is a 3-hydroxyproline (Pro970). Pro971 carries the 4-hydroxyproline modification. Residues 983–998 (VGPPGPPGPPGPPGPP) are compositionally biased toward pro residues. Pro985 carries the 3-hydroxyproline modification. Position 986 is a 4-hydroxyproline (Pro986). Pro988 bears the 3-hydroxyproline mark. Pro989 bears the 4-hydroxyproline mark. Pro991 is subject to 3-hydroxyproline. 4-hydroxyproline occurs at positions 992, 995, and 998.

This sequence belongs to the fibrillar collagen family. As to quaternary structure, trimers of one alpha 2(I) and two alpha 1(I) chains. Contains mostly 4-hydroxyproline. Proline residues at the third position of the tripeptide repeating unit (G-X-Y) are hydroxylated in some or all of the chains. Post-translationally, contains 3-hydroxyproline at a few sites. This modification occurs on the first proline residue in the sequence motif Gly-Pro-Hyp, where Hyp is 4-hydroxyproline. In terms of processing, lysine residues at the third position of the tripeptide repeating unit (G-X-Y) are 5-hydroxylated in some or all of the chains. O-glycosylated on hydroxylated lysine residues. The O-linked glycan consists of a Glc-Gal disaccharide. As to expression, expressed in bones.

Its subcellular location is the secreted. It is found in the extracellular space. The protein resides in the extracellular matrix. Functionally, type I collagen is a member of group I collagen (fibrillar forming collagen). This is Collagen alpha-1(I) chain from Glyptodon sp. (strain SLP-2019) (Giant armadillo).